The chain runs to 199 residues: Pneumococcal vaccine antigen A homolog (199 aa).

It is found in the cell surface. In Streptococcus pyogenes serotype M6 (strain ATCC BAA-946 / MGAS10394), this protein is Pneumococcal vaccine antigen A homolog (pvaA).